The sequence spans 466 residues: Methylenetetrahydrofolate--tRNA-(uracil-5-)-methyltransferase TrmFO (466 aa).

Residue glycine 12–glycine 17 coordinates FAD.

The protein belongs to the MnmG family. TrmFO subfamily. Requires FAD as cofactor.

The protein resides in the cytoplasm. The catalysed reaction is uridine(54) in tRNA + (6R)-5,10-methylene-5,6,7,8-tetrahydrofolate + NADH + H(+) = 5-methyluridine(54) in tRNA + (6S)-5,6,7,8-tetrahydrofolate + NAD(+). It carries out the reaction uridine(54) in tRNA + (6R)-5,10-methylene-5,6,7,8-tetrahydrofolate + NADPH + H(+) = 5-methyluridine(54) in tRNA + (6S)-5,6,7,8-tetrahydrofolate + NADP(+). Catalyzes the folate-dependent formation of 5-methyl-uridine at position 54 (M-5-U54) in all tRNAs. This chain is Methylenetetrahydrofolate--tRNA-(uracil-5-)-methyltransferase TrmFO, found in Synechococcus elongatus (strain ATCC 33912 / PCC 7942 / FACHB-805) (Anacystis nidulans R2).